The chain runs to 372 residues: Adaptive-response sensory kinase SasA (372 aa).

The Histidine kinase domain maps to 147–360 (MVAHELRTPL…CFHFTVPVWQ (214 aa)). His-150 is subject to Phosphohistidine; by autocatalysis.

As to quaternary structure, homooligomerizes. Interacts with KaiC. Participates in the KaiBC complex, whose core is composed of a KaiC homohexamer and 6 KaiB.

It carries out the reaction ATP + protein L-histidine = ADP + protein N-phospho-L-histidine.. In terms of biological role, member of the two-component regulatory system SasA/RpaA involved in genome-wide circadian gene expression. One of several clock output pathways. Participates in the Kai clock protein complex, the main circadian regulator in cyanobacteria, via its interaction with KaiC. KaiC enhances the autophosphorylation activity of SasA, which then transfers its phosphate group to RpaA to activate it. In addition to its output function, recruits fold-shifted KaiB (KaiB(fs)) to KaiC to cooperatively form the KaiB(6):KaiC(6) complex (independent of SasA kinase activity). Required for robustness of the circadian rhythm of gene expression and is involved in clock output, also required for adaptation to light/dark cycles. The chain is Adaptive-response sensory kinase SasA from Prochlorococcus marinus (strain MIT 9301).